A 368-amino-acid chain; its full sequence is 3-isopropylmalate dehydrogenase (368 aa).

Position 79–91 (79–91 (GPEWGTSSTVRPE)) interacts with NAD(+). Residues R98, R108, R137, and D226 each contribute to the substrate site. Positions 226, 251, and 255 each coordinate Mg(2+). 291-303 (GSAPDISGKGIVN) contributes to the NAD(+) binding site.

This sequence belongs to the isocitrate and isopropylmalate dehydrogenases family. As to quaternary structure, homodimer. The cofactor is Mg(2+). Requires Mn(2+) as cofactor.

It localises to the cytoplasm. The catalysed reaction is (2R,3S)-3-isopropylmalate + NAD(+) = 4-methyl-2-oxopentanoate + CO2 + NADH. Its pathway is amino-acid biosynthesis; L-leucine biosynthesis; L-leucine from 3-methyl-2-oxobutanoate: step 3/4. Its function is as follows. Catalyzes the oxidation of 3-carboxy-2-hydroxy-4-methylpentanoate (3-isopropylmalate) to 3-carboxy-4-methyl-2-oxopentanoate. The product decarboxylates to 4-methyl-2 oxopentanoate. This is 3-isopropylmalate dehydrogenase (LEU1) from Sordaria macrospora.